Here is a 104-residue protein sequence, read N- to C-terminus: L-rhamnose mutarotase (104 aa).

Residue tyrosine 18 participates in substrate binding. The active-site Proton donor is the histidine 22. Substrate-binding positions include tyrosine 41 and 76–77; that span reads WW.

It belongs to the rhamnose mutarotase family. As to quaternary structure, homodimer.

It localises to the cytoplasm. It catalyses the reaction alpha-L-rhamnose = beta-L-rhamnose. Its pathway is carbohydrate metabolism; L-rhamnose metabolism. Functionally, involved in the anomeric conversion of L-rhamnose. In Sinorhizobium medicae (strain WSM419) (Ensifer medicae), this protein is L-rhamnose mutarotase.